The chain runs to 452 residues: Probable ECA polymerase (452 aa).

11 helical membrane passes run 6–26, 37–57, 63–83, 118–138, 155–175, 181–201, 207–227, 228–248, 341–361, 378–398, and 410–430; these read FSGL…LTWF, VFFS…TSVL, VGVA…CFYG, VILM…NGFL, GVAL…VYFL, AWLF…MIVG, IIIA…ISLW, MLVA…LKRY, LVVM…GLII, YKAA…IVLA, and VFFL…FWLF.

This sequence belongs to the WzyE family. In terms of assembly, probably part of a complex composed of WzxE, WzyE and WzzE.

Its subcellular location is the cell inner membrane. The protein operates within bacterial outer membrane biogenesis; enterobacterial common antigen biosynthesis. Functionally, probably involved in the polymerization of enterobacterial common antigen (ECA) trisaccharide repeat units. The polypeptide is Probable ECA polymerase (Salmonella agona (strain SL483)).